The chain runs to 236 residues: Methylosome subunit pICln (236 aa).

Residues 1–20 (MSFLKSFPPPGPTEGLRHQQ) are disordered. At S2 the chain carries N-acetylserine. S101, S143, S192, S194, S197, and S209 each carry phosphoserine. Residue T222 is modified to Phosphothreonine.

It belongs to the pICln (TC 1.A.47) family. As to quaternary structure, component of the methylosome, a 20S complex containing at least PRMT5/SKB1, WDR77/MEP50 and CLNS1A/pICln. May mediate SNRPD1 and SNRPD3 methylation. Forms a 6S pICln-Sm complex composed of CLNS1A/pICln, SNRPD1, SNRPD2, SNRPE, SNRPF and SNRPG; ring-like structure where CLNS1A/pICln mimics additional Sm proteins and which is unable to assemble into the core snRNP. Interacts with LSM10 and LSM11. Widely distributed but expressed more abundantly in nonpigmented ciliary epithelial cells than in pigmented ones.

It is found in the cytoplasm. It localises to the cytosol. The protein resides in the nucleus. Its subcellular location is the cytoskeleton. Involved in both the assembly of spliceosomal snRNPs and the methylation of Sm proteins. Chaperone that regulates the assembly of spliceosomal U1, U2, U4 and U5 small nuclear ribonucleoproteins (snRNPs), the building blocks of the spliceosome, and thereby plays an important role in the splicing of cellular pre-mRNAs. Most spliceosomal snRNPs contain a common set of Sm proteins SNRPB, SNRPD1, SNRPD2, SNRPD3, SNRPE, SNRPF and SNRPG that assemble in a heptameric protein ring on the Sm site of the small nuclear RNA to form the core snRNP (Sm core). In the cytosol, the Sm proteins SNRPD1, SNRPD2, SNRPE, SNRPF and SNRPG are trapped in an inactive 6S pICln-Sm complex by the chaperone CLNS1A that controls the assembly of the core snRNP. Dissociation by the SMN complex of CLNS1A from the trapped Sm proteins and their transfer to an SMN-Sm complex triggers the assembly of core snRNPs and their transport to the nucleus. The sequence is that of Methylosome subunit pICln (CLNS1A) from Oryctolagus cuniculus (Rabbit).